The following is a 263-amino-acid chain: tRNA pseudouridine synthase A (263 aa).

Asp73 acts as the Nucleophile in catalysis. Substrate is bound at residue Tyr131.

This sequence belongs to the tRNA pseudouridine synthase TruA family. In terms of assembly, homodimer.

It carries out the reaction uridine(38/39/40) in tRNA = pseudouridine(38/39/40) in tRNA. Its function is as follows. Formation of pseudouridine at positions 38, 39 and 40 in the anticodon stem and loop of transfer RNAs. This chain is tRNA pseudouridine synthase A, found in Mycoplasmoides gallisepticum (strain R(low / passage 15 / clone 2)) (Mycoplasma gallisepticum).